Here is a 280-residue protein sequence, read N- to C-terminus: Diaminopimelate epimerase (280 aa).

Substrate contacts are provided by N11 and N64. The active-site Proton donor is C73. Substrate contacts are provided by residues 74 to 75 (GN), N162, N195, and 213 to 214 (ER). The active-site Proton acceptor is the C222. Substrate is bound at residue 223 to 224 (GT).

The protein belongs to the diaminopimelate epimerase family. Homodimer.

It localises to the cytoplasm. It carries out the reaction (2S,6S)-2,6-diaminopimelate = meso-2,6-diaminopimelate. Its pathway is amino-acid biosynthesis; L-lysine biosynthesis via DAP pathway; DL-2,6-diaminopimelate from LL-2,6-diaminopimelate: step 1/1. Functionally, catalyzes the stereoinversion of LL-2,6-diaminopimelate (L,L-DAP) to meso-diaminopimelate (meso-DAP), a precursor of L-lysine and an essential component of the bacterial peptidoglycan. This Pelotomaculum thermopropionicum (strain DSM 13744 / JCM 10971 / SI) protein is Diaminopimelate epimerase.